The following is a 307-amino-acid chain: Transcription initiation factor IIB (307 aa).

The TFIIB-type zinc-finger motif lies at 11–42; that stretch reads FTEECPACGSAEIVFDEERGEYVCANCGLVTE. Residues C15, C18, C34, and C37 each contribute to the Zn(2+) site. Positions 48-69 are disordered; it reads PGPEWRHFNPDQRQRRSRTGEP. Positions 50-69 are enriched in basic and acidic residues; the sequence is PEWRHFNPDQRQRRSRTGEP. Tandem repeats lie at residues 123-207 and 218-299.

It belongs to the TFIIB family.

Functionally, stabilizes TBP binding to an archaeal box-A promoter. Also responsible for recruiting RNA polymerase II to the pre-initiation complex (DNA-TBP-TFIIB). This is Transcription initiation factor IIB from Methanopyrus kandleri (strain AV19 / DSM 6324 / JCM 9639 / NBRC 100938).